Here is a 122-residue protein sequence, read N- to C-terminus: Large ribosomal subunit protein uL14 (122 aa).

This sequence belongs to the universal ribosomal protein uL14 family. As to quaternary structure, part of the 50S ribosomal subunit. Forms a cluster with proteins L3 and L19. In the 70S ribosome, L14 and L19 interact and together make contacts with the 16S rRNA in bridges B5 and B8.

In terms of biological role, binds to 23S rRNA. Forms part of two intersubunit bridges in the 70S ribosome. In Thermotoga petrophila (strain ATCC BAA-488 / DSM 13995 / JCM 10881 / RKU-1), this protein is Large ribosomal subunit protein uL14.